Consider the following 764-residue polypeptide: Probable 5-methyltetrahydropteroyltriglutamate--homocysteine methyltransferase (764 aa).

Positions 19 and 126 each coordinate 5-methyltetrahydropteroyltri-L-glutamate. The residue at position 182 (Ser182) is a Phosphoserine. Thr441 is subject to Phosphothreonine. Residues 442 to 444 (IGS) and Glu495 contribute to the L-homocysteine site. Residues 442 to 444 (IGS) and Glu495 each bind L-methionine. Residues Asp500, Tyr523, 526–527 (RC), and Trp572 each bind 5-methyltetrahydropteroyltri-L-glutamate. Residue Asp610 participates in L-homocysteine binding. Asp610 provides a ligand contact to L-methionine. Residues His652, Cys654, and Glu676 each contribute to the Zn(2+) site. Catalysis depends on His703, which acts as the Proton donor. Residue Cys735 participates in Zn(2+) binding.

Belongs to the vitamin-B12 independent methionine synthase family. Requires Zn(2+) as cofactor.

Its subcellular location is the nucleus. The protein localises to the cytoplasm. The catalysed reaction is 5-methyltetrahydropteroyltri-L-glutamate + L-homocysteine = tetrahydropteroyltri-L-glutamate + L-methionine. The protein operates within amino-acid biosynthesis; L-methionine biosynthesis via de novo pathway; L-methionine from L-homocysteine (MetE route): step 1/1. Its function is as follows. Catalyzes the transfer of a methyl group from 5-methyltetrahydrofolate to homocysteine resulting in methionine formation. This is Probable 5-methyltetrahydropteroyltriglutamate--homocysteine methyltransferase (met26) from Schizosaccharomyces pombe (strain 972 / ATCC 24843) (Fission yeast).